Here is a 150-residue protein sequence, read N- to C-terminus: Cytochrome c oxidase subunit 5A, mitochondrial (150 aa).

The N-terminal 41 residues, 1–41 (MLGAALRRCAVAATTRAGPRGLLHSARTPGPAAAIQSVRCX), are a transit peptide targeting the mitochondrion. An SIFI-degron motif is present at residues 2 to 17 (LGAALRRCAVAATTRA). Residues Lys87 and Lys113 each carry the N6-acetyllysine modification. Thr141 bears the Phosphothreonine mark.

Belongs to the cytochrome c oxidase subunit 5A family. As to quaternary structure, component of the cytochrome c oxidase (complex IV, CIV), a multisubunit enzyme composed of 14 subunits. The complex is composed of a catalytic core of 3 subunits MT-CO1, MT-CO2 and MT-CO3, encoded in the mitochondrial DNA, and 11 supernumerary subunits COX4I, COX5A, COX5B, COX6A, COX6B, COX6C, COX7A, COX7B, COX7C, COX8 and NDUFA4, which are encoded in the nuclear genome. The complex exists as a monomer or a dimer and forms supercomplexes (SCs) in the inner mitochondrial membrane with NADH-ubiquinone oxidoreductase (complex I, CI) and ubiquinol-cytochrome c oxidoreductase (cytochrome b-c1 complex, complex III, CIII), resulting in different assemblies (supercomplex SCI(1)III(2)IV(1) and megacomplex MCI(2)III(2)IV(2)). Interacts with AFG1L. Interacts with RAB5IF. Post-translationally, in response to mitochondrial stress, the precursor protein is ubiquitinated by the SIFI complex in the cytoplasm before mitochondrial import, leading to its degradation. Within the SIFI complex, UBR4 initiates ubiquitin chain that are further elongated or branched by KCMF1.

It localises to the mitochondrion inner membrane. It functions in the pathway energy metabolism; oxidative phosphorylation. In terms of biological role, component of the cytochrome c oxidase, the last enzyme in the mitochondrial electron transport chain which drives oxidative phosphorylation. The respiratory chain contains 3 multisubunit complexes succinate dehydrogenase (complex II, CII), ubiquinol-cytochrome c oxidoreductase (cytochrome b-c1 complex, complex III, CIII) and cytochrome c oxidase (complex IV, CIV), that cooperate to transfer electrons derived from NADH and succinate to molecular oxygen, creating an electrochemical gradient over the inner membrane that drives transmembrane transport and the ATP synthase. Cytochrome c oxidase is the component of the respiratory chain that catalyzes the reduction of oxygen to water. Electrons originating from reduced cytochrome c in the intermembrane space (IMS) are transferred via the dinuclear copper A center (CU(A)) of subunit 2 and heme A of subunit 1 to the active site in subunit 1, a binuclear center (BNC) formed by heme A3 and copper B (CU(B)). The BNC reduces molecular oxygen to 2 water molecules using 4 electrons from cytochrome c in the IMS and 4 protons from the mitochondrial matrix. This is Cytochrome c oxidase subunit 5A, mitochondrial (COX5A) from Pan paniscus (Pygmy chimpanzee).